We begin with the raw amino-acid sequence, 208 residues long: Pyridoxal 5'-phosphate synthase subunit PdxT (208 aa).

46-48 serves as a coordination point for L-glutamine; it reads GES. The active-site Nucleophile is the C78. L-glutamine contacts are provided by residues R105 and 156 to 157; that span reads IR. Residues H192 and E194 each act as charge relay system in the active site.

Belongs to the glutaminase PdxT/SNO family. In the presence of PdxS, forms a dodecamer of heterodimers. Only shows activity in the heterodimer.

It carries out the reaction aldehydo-D-ribose 5-phosphate + D-glyceraldehyde 3-phosphate + L-glutamine = pyridoxal 5'-phosphate + L-glutamate + phosphate + 3 H2O + H(+). It catalyses the reaction L-glutamine + H2O = L-glutamate + NH4(+). Its pathway is cofactor biosynthesis; pyridoxal 5'-phosphate biosynthesis. In terms of biological role, catalyzes the hydrolysis of glutamine to glutamate and ammonia as part of the biosynthesis of pyridoxal 5'-phosphate. The resulting ammonia molecule is channeled to the active site of PdxS. The sequence is that of Pyridoxal 5'-phosphate synthase subunit PdxT from Bifidobacterium adolescentis (strain ATCC 15703 / DSM 20083 / NCTC 11814 / E194a).